The sequence spans 398 residues: DNA replication and repair protein RecF (398 aa).

Residue 30 to 37 (GSNGLGKT) participates in ATP binding.

Belongs to the RecF family.

The protein localises to the cytoplasm. In terms of biological role, the RecF protein is involved in DNA metabolism; it is required for DNA replication and normal SOS inducibility. RecF binds preferentially to single-stranded, linear DNA. It also seems to bind ATP. The protein is DNA replication and repair protein RecF of Renibacterium salmoninarum (strain ATCC 33209 / DSM 20767 / JCM 11484 / NBRC 15589 / NCIMB 2235).